We begin with the raw amino-acid sequence, 236 residues long: tRNA1(Val) (adenine(37)-N6)-methyltransferase (236 aa).

Belongs to the methyltransferase superfamily. tRNA (adenine-N(6)-)-methyltransferase family.

It is found in the cytoplasm. It catalyses the reaction adenosine(37) in tRNA1(Val) + S-adenosyl-L-methionine = N(6)-methyladenosine(37) in tRNA1(Val) + S-adenosyl-L-homocysteine + H(+). Specifically methylates the adenine in position 37 of tRNA(1)(Val) (anticodon cmo5UAC). The protein is tRNA1(Val) (adenine(37)-N6)-methyltransferase of Shewanella sp. (strain MR-7).